A 506-amino-acid chain; its full sequence is UDP-N-acetylmuramoyl-L-alanyl-D-glutamate--2,6-diaminopimelate ligase (506 aa).

Residue Ser-42 coordinates UDP-N-acetyl-alpha-D-muramoyl-L-alanyl-D-glutamate. ATP is bound at residue 125 to 131; the sequence is GTSGKTT. UDP-N-acetyl-alpha-D-muramoyl-L-alanyl-D-glutamate-binding positions include 166–167, Ser-193, and Arg-201; that span reads TT. Position 233 is an N6-carboxylysine (Lys-233). Residues Arg-395, 419-422, Gly-475, and Glu-479 contribute to the meso-2,6-diaminopimelate site; that span reads DNPR. A Meso-diaminopimelate recognition motif motif is present at residues 419-422; it reads DNPR.

Belongs to the MurCDEF family. MurE subfamily. Mg(2+) is required as a cofactor. In terms of processing, carboxylation is probably crucial for Mg(2+) binding and, consequently, for the gamma-phosphate positioning of ATP.

It localises to the cytoplasm. It carries out the reaction UDP-N-acetyl-alpha-D-muramoyl-L-alanyl-D-glutamate + meso-2,6-diaminopimelate + ATP = UDP-N-acetyl-alpha-D-muramoyl-L-alanyl-gamma-D-glutamyl-meso-2,6-diaminopimelate + ADP + phosphate + H(+). It participates in cell wall biogenesis; peptidoglycan biosynthesis. Functionally, catalyzes the addition of meso-diaminopimelic acid to the nucleotide precursor UDP-N-acetylmuramoyl-L-alanyl-D-glutamate (UMAG) in the biosynthesis of bacterial cell-wall peptidoglycan. This Streptomyces coelicolor (strain ATCC BAA-471 / A3(2) / M145) protein is UDP-N-acetylmuramoyl-L-alanyl-D-glutamate--2,6-diaminopimelate ligase.